Consider the following 495-residue polypeptide: Probable cytosol aminopeptidase (495 aa).

Mn(2+)-binding residues include Lys264 and Asp269. Residue Lys276 is part of the active site. Mn(2+)-binding residues include Asp287, Asp346, and Glu348. Arg350 is an active-site residue.

Belongs to the peptidase M17 family. Mn(2+) serves as cofactor.

Its subcellular location is the cytoplasm. The catalysed reaction is Release of an N-terminal amino acid, Xaa-|-Yaa-, in which Xaa is preferably Leu, but may be other amino acids including Pro although not Arg or Lys, and Yaa may be Pro. Amino acid amides and methyl esters are also readily hydrolyzed, but rates on arylamides are exceedingly low.. It carries out the reaction Release of an N-terminal amino acid, preferentially leucine, but not glutamic or aspartic acids.. Presumably involved in the processing and regular turnover of intracellular proteins. Catalyzes the removal of unsubstituted N-terminal amino acids from various peptides. The sequence is that of Probable cytosol aminopeptidase from Geotalea uraniireducens (strain Rf4) (Geobacter uraniireducens).